Reading from the N-terminus, the 465-residue chain is Ribulose bisphosphate carboxylase large chain (465 aa).

N6,N6,N6-trimethyllysine is present on Lys-4. 2 residues coordinate substrate: Asn-113 and Thr-163. The active-site Proton acceptor is Lys-165. Lys-167 contributes to the substrate binding site. Positions 191, 193, and 194 each coordinate Mg(2+). At Lys-191 the chain carries N6-carboxylysine. His-284 functions as the Proton acceptor in the catalytic mechanism. 3 residues coordinate substrate: Arg-285, His-317, and Ser-369.

The protein belongs to the RuBisCO large chain family. Type I subfamily. Heterohexadecamer of 8 large chains and 8 small chains; disulfide-linked. The disulfide link is formed within the large subunit homodimers. It depends on Mg(2+) as a cofactor. Post-translationally, the disulfide bond which can form in the large chain dimeric partners within the hexadecamer appears to be associated with oxidative stress and protein turnover.

It localises to the plastid. The protein resides in the chloroplast. It catalyses the reaction 2 (2R)-3-phosphoglycerate + 2 H(+) = D-ribulose 1,5-bisphosphate + CO2 + H2O. The enzyme catalyses D-ribulose 1,5-bisphosphate + O2 = 2-phosphoglycolate + (2R)-3-phosphoglycerate + 2 H(+). Its function is as follows. RuBisCO catalyzes two reactions: the carboxylation of D-ribulose 1,5-bisphosphate, the primary event in carbon dioxide fixation, as well as the oxidative fragmentation of the pentose substrate in the photorespiration process. Both reactions occur simultaneously and in competition at the same active site. This chain is Ribulose bisphosphate carboxylase large chain, found in Ulmus alata (Winged elm).